Here is a 691-residue protein sequence, read N- to C-terminus: Elongation factor G (691 aa).

Residues 8–282 (ERVRNIGIAA…AVVNYLPAPV (275 aa)) enclose the tr-type G domain. GTP-binding positions include 17-24 (AHIDAGKT), 81-85 (DTPGH), and 135-138 (NKMD).

This sequence belongs to the TRAFAC class translation factor GTPase superfamily. Classic translation factor GTPase family. EF-G/EF-2 subfamily.

Its subcellular location is the cytoplasm. Catalyzes the GTP-dependent ribosomal translocation step during translation elongation. During this step, the ribosome changes from the pre-translocational (PRE) to the post-translocational (POST) state as the newly formed A-site-bound peptidyl-tRNA and P-site-bound deacylated tRNA move to the P and E sites, respectively. Catalyzes the coordinated movement of the two tRNA molecules, the mRNA and conformational changes in the ribosome. This is Elongation factor G from Prochlorococcus marinus (strain NATL1A).